Here is a 553-residue protein sequence, read N- to C-terminus: ATP synthase subunit alpha (553 aa).

Position 173–180 (173–180 (GDRQTGKT)) interacts with ATP. The segment at 527–553 (EALDPSAVEREEIAVHHRKPSDETAGH) is disordered. Residues 533–553 (AVEREEIAVHHRKPSDETAGH) show a composition bias toward basic and acidic residues.

The protein belongs to the ATPase alpha/beta chains family. In terms of assembly, F-type ATPases have 2 components, CF(1) - the catalytic core - and CF(0) - the membrane proton channel. CF(1) has five subunits: alpha(3), beta(3), gamma(1), delta(1), epsilon(1). CF(0) has three main subunits: a(1), b(2) and c(9-12). The alpha and beta chains form an alternating ring which encloses part of the gamma chain. CF(1) is attached to CF(0) by a central stalk formed by the gamma and epsilon chains, while a peripheral stalk is formed by the delta and b chains.

It is found in the cell membrane. The enzyme catalyses ATP + H2O + 4 H(+)(in) = ADP + phosphate + 5 H(+)(out). Produces ATP from ADP in the presence of a proton gradient across the membrane. The alpha chain is a regulatory subunit. The sequence is that of ATP synthase subunit alpha from Parafrankia sp. (strain EAN1pec).